Here is a 365-residue protein sequence, read N- to C-terminus: Putative agmatine deiminase (365 aa).

Catalysis depends on Cys-357, which acts as the Amidino-cysteine intermediate.

Belongs to the agmatine deiminase family.

It carries out the reaction agmatine + H2O = N-carbamoylputrescine + NH4(+). This is Putative agmatine deiminase from Yersinia pseudotuberculosis serotype O:1b (strain IP 31758).